A 460-amino-acid polypeptide reads, in one-letter code: Phosphoenolpyruvate carboxylase (460 aa).

Belongs to the PEPCase type 2 family. Homotetramer. It depends on Mg(2+) as a cofactor.

The catalysed reaction is oxaloacetate + phosphate = phosphoenolpyruvate + hydrogencarbonate. In terms of biological role, catalyzes the irreversible beta-carboxylation of phosphoenolpyruvate (PEP) to form oxaloacetate (OAA), a four-carbon dicarboxylic acid source for the tricarboxylic acid cycle. This is Phosphoenolpyruvate carboxylase from Pyrobaculum aerophilum (strain ATCC 51768 / DSM 7523 / JCM 9630 / CIP 104966 / NBRC 100827 / IM2).